We begin with the raw amino-acid sequence, 591 residues long: V-type ATP synthase alpha chain (591 aa).

Residue 242–249 (GPFGAGKT) coordinates ATP.

The protein belongs to the ATPase alpha/beta chains family.

The enzyme catalyses ATP + H2O + 4 H(+)(in) = ADP + phosphate + 5 H(+)(out). Its function is as follows. Produces ATP from ADP in the presence of a proton gradient across the membrane. The V-type alpha chain is a catalytic subunit. This chain is V-type ATP synthase alpha chain, found in Chlamydia abortus (strain DSM 27085 / S26/3) (Chlamydophila abortus).